Consider the following 466-residue polypeptide: Tyrosinase HcTyr1 (466 aa).

Cu cation-binding residues include His-43, His-78, His-87, His-211, His-215, and His-238.

The protein belongs to the tyrosinase family. As to quaternary structure, monomer. Formation of a dimer is observed when the protein is in its holo-form. It depends on Cu(2+) as a cofactor. In vitro, the C-terminal lid-domain is slowly cleaved off in an autoprocessive time dependent manner, leading to the formation of cleaved-HcTyr1. The processing rate is not influenced by factors such as pH and added metal ions.

The enzyme catalyses L-tyrosine + O2 = L-dopaquinone + H2O. The catalysed reaction is 2 L-tyrosine + O2 = 2 L-dopa. It carries out the reaction 2 L-dopa + O2 = 2 L-dopaquinone + 2 H2O. Cleavage of the lid-domain increases activity levels, affinity for substrate and turnover rate. Exhibits high saline tolerance. Functionally, copper-containing oxidase that catalyzes the conversion of L-tyrosine to L-dopa and then to L-dopaquinone. Can use various phenols such as p-coumaric acid, phenol, pyrocatechol, syringol or pyrogallol. Accepts several of the constituents of lignin and potentially participates in lignin functionalization. This Hahella sp. (strain CCB-MM4) protein is Tyrosinase HcTyr1.